The primary structure comprises 218 residues: Ribosomal RNA small subunit methyltransferase G (218 aa).

Residues Gly82, Leu87, 137–138 (VE), and Arg152 each bind S-adenosyl-L-methionine.

Belongs to the methyltransferase superfamily. RNA methyltransferase RsmG family.

The protein resides in the cytoplasm. The catalysed reaction is guanosine(527) in 16S rRNA + S-adenosyl-L-methionine = N(7)-methylguanosine(527) in 16S rRNA + S-adenosyl-L-homocysteine. Its function is as follows. Specifically methylates the N7 position of guanine in position 527 of 16S rRNA. In Herminiimonas arsenicoxydans, this protein is Ribosomal RNA small subunit methyltransferase G.